The primary structure comprises 92 residues: UPF0250 protein PD_0532 (92 aa).

The protein belongs to the UPF0250 family.

This is UPF0250 protein PD_0532 from Xylella fastidiosa (strain Temecula1 / ATCC 700964).